The primary structure comprises 551 residues: Dihydroxy-acid dehydratase (551 aa).

D78 serves as a coordination point for Mg(2+). C119 provides a ligand contact to [2Fe-2S] cluster. Mg(2+) contacts are provided by D120 and K121. K121 bears the N6-carboxylysine mark. Residue C191 coordinates [2Fe-2S] cluster. E441 contributes to the Mg(2+) binding site. Residue S467 is the Proton acceptor of the active site.

It belongs to the IlvD/Edd family. As to quaternary structure, homodimer. [2Fe-2S] cluster serves as cofactor. It depends on Mg(2+) as a cofactor.

It carries out the reaction (2R)-2,3-dihydroxy-3-methylbutanoate = 3-methyl-2-oxobutanoate + H2O. The enzyme catalyses (2R,3R)-2,3-dihydroxy-3-methylpentanoate = (S)-3-methyl-2-oxopentanoate + H2O. It participates in amino-acid biosynthesis; L-isoleucine biosynthesis; L-isoleucine from 2-oxobutanoate: step 3/4. It functions in the pathway amino-acid biosynthesis; L-valine biosynthesis; L-valine from pyruvate: step 3/4. Functionally, functions in the biosynthesis of branched-chain amino acids. Catalyzes the dehydration of (2R,3R)-2,3-dihydroxy-3-methylpentanoate (2,3-dihydroxy-3-methylvalerate) into 2-oxo-3-methylpentanoate (2-oxo-3-methylvalerate) and of (2R)-2,3-dihydroxy-3-methylbutanoate (2,3-dihydroxyisovalerate) into 2-oxo-3-methylbutanoate (2-oxoisovalerate), the penultimate precursor to L-isoleucine and L-valine, respectively. The protein is Dihydroxy-acid dehydratase of Pyrococcus furiosus (strain ATCC 43587 / DSM 3638 / JCM 8422 / Vc1).